The sequence spans 289 residues: BTB/POZ domain-containing protein KCTD7 (289 aa).

Positions 1-40 (MVVVTGREPDSRRPDGAMSSSDAEDDFLEPATPTATQAGH) are disordered. The BTB domain maps to 53 to 141 (VPLNIGGAHF…YAIGPLLEQL (89 aa)).

As to quaternary structure, interacts with CUL3.

The protein localises to the cell membrane. It is found in the cytoplasm. It localises to the cytosol. In terms of biological role, may be involved in the control of excitability of cortical neurons. The sequence is that of BTB/POZ domain-containing protein KCTD7 (KCTD7) from Bos taurus (Bovine).